We begin with the raw amino-acid sequence, 784 residues long: Probable phosphoketolase (784 aa).

Belongs to the XFP family. The cofactor is thiamine diphosphate.

The chain is Probable phosphoketolase from Rhodopseudomonas palustris (strain HaA2).